We begin with the raw amino-acid sequence, 249 residues long: 1-(5-phosphoribosyl)-5-[(5-phosphoribosylamino)methylideneamino] imidazole-4-carboxamide isomerase (249 aa).

The active-site Proton acceptor is Asp-8. Residue Asp-131 is the Proton donor of the active site.

This sequence belongs to the HisA/HisF family.

The protein resides in the cytoplasm. The catalysed reaction is 1-(5-phospho-beta-D-ribosyl)-5-[(5-phospho-beta-D-ribosylamino)methylideneamino]imidazole-4-carboxamide = 5-[(5-phospho-1-deoxy-D-ribulos-1-ylimino)methylamino]-1-(5-phospho-beta-D-ribosyl)imidazole-4-carboxamide. The protein operates within amino-acid biosynthesis; L-histidine biosynthesis; L-histidine from 5-phospho-alpha-D-ribose 1-diphosphate: step 4/9. In Nitrosomonas europaea (strain ATCC 19718 / CIP 103999 / KCTC 2705 / NBRC 14298), this protein is 1-(5-phosphoribosyl)-5-[(5-phosphoribosylamino)methylideneamino] imidazole-4-carboxamide isomerase.